Consider the following 274-residue polypeptide: 2-dehydro-3-deoxyphosphooctonate aldolase (274 aa).

It belongs to the KdsA family.

The protein resides in the cytoplasm. The enzyme catalyses D-arabinose 5-phosphate + phosphoenolpyruvate + H2O = 3-deoxy-alpha-D-manno-2-octulosonate-8-phosphate + phosphate. Its pathway is carbohydrate biosynthesis; 3-deoxy-D-manno-octulosonate biosynthesis; 3-deoxy-D-manno-octulosonate from D-ribulose 5-phosphate: step 2/3. The protein operates within bacterial outer membrane biogenesis; lipopolysaccharide biosynthesis. The sequence is that of 2-dehydro-3-deoxyphosphooctonate aldolase from Rickettsia peacockii (strain Rustic).